The sequence spans 542 residues: Chondroitin sulfate N-acetylgalactosaminyltransferase 2 (542 aa).

Topologically, residues 1 to 11 (MPRRGLILHTR) are cytoplasmic. The helical; Signal-anchor for type II membrane protein transmembrane segment at 12–32 (THWLLLGLALLCSLVLFMYLL) threads the bilayer. Residues 33 to 542 (ECAPQTDGNA…AYRTNSEAVG (510 aa)) lie on the Lumenal side of the membrane. An N-linked (GlcNAc...) asparagine glycan is attached at Asn-41. The stretch at 59–105 (ALLQEQEEHYQTRATSLKRQIAQLKQELQEMSEKMRSLQERRNVGAN) forms a coiled coil. N-linked (GlcNAc...) asparagine glycosylation occurs at Asn-333. The a divalent metal cation site is built by Asp-369 and His-486.

Belongs to the chondroitin N-acetylgalactosaminyltransferase family. Ubiquitous.

The protein resides in the golgi apparatus. It is found in the golgi stack membrane. The catalysed reaction is 3-O-(beta-D-GlcA-(1-&gt;3)-beta-D-Gal-(1-&gt;3)-beta-D-Gal-(1-&gt;4)-beta-D-Xyl)-L-seryl-[protein] + UDP-N-acetyl-alpha-D-galactosamine = 3-O-(beta-D-GalNAc-(1-&gt;4)-beta-D-GlcA-(1-&gt;3)-beta-D-Gal-(1-&gt;3)-beta-D-Gal-(1-&gt;4)-beta-D-Xyl)-L-seryl-[protein] + UDP + H(+). Transfers 1,4-N-acetylgalactosamine (GalNAc) from UDP-GalNAc to the non-reducing end of glucuronic acid (GlcUA). Required for addition of the first GalNAc to the core tetrasaccharide linker and for elongation of chondroitin chains. This is Chondroitin sulfate N-acetylgalactosaminyltransferase 2 (CSGALNACT2) from Homo sapiens (Human).